A 254-amino-acid polypeptide reads, in one-letter code: Proteasome activator complex subunit 3 (254 aa).

2 positions are modified to N6-acetyllysine: Lys-6 and Lys-14. N6-acetyllysine; by P300/CBP is present on Lys-195.

As to quaternary structure, homoheptamer. Post-translationally, acetylation at the major site Lys-195 is important for oligomerization and ability to degrade its target substrates. Deacetylated by SIRT1.

Functionally, implicated in immunoproteasome assembly and required for efficient antigen processing. The PA28 activator complex enhances the generation of class I binding peptides by altering the cleavage pattern of the proteasome. This is Proteasome activator complex subunit 3 from Gallus gallus (Chicken).